A 276-amino-acid chain; its full sequence is Tryptophan synthase alpha chain (276 aa).

Catalysis depends on proton acceptor residues glutamate 49 and aspartate 60.

It belongs to the TrpA family. As to quaternary structure, tetramer of two alpha and two beta chains.

It carries out the reaction (1S,2R)-1-C-(indol-3-yl)glycerol 3-phosphate + L-serine = D-glyceraldehyde 3-phosphate + L-tryptophan + H2O. It participates in amino-acid biosynthesis; L-tryptophan biosynthesis; L-tryptophan from chorismate: step 5/5. Functionally, the alpha subunit is responsible for the aldol cleavage of indoleglycerol phosphate to indole and glyceraldehyde 3-phosphate. This is Tryptophan synthase alpha chain from Acidiphilium cryptum (strain JF-5).